Consider the following 323-residue polypeptide: tRNA dimethylallyltransferase (323 aa).

Residue 18–25 participates in ATP binding; the sequence is GPTASGKT. 20 to 25 lines the substrate pocket; the sequence is TASGKT. Residues 44–47 form an interaction with substrate tRNA region; it reads DSAL.

This sequence belongs to the IPP transferase family. In terms of assembly, monomer. Mg(2+) serves as cofactor.

It carries out the reaction adenosine(37) in tRNA + dimethylallyl diphosphate = N(6)-dimethylallyladenosine(37) in tRNA + diphosphate. Catalyzes the transfer of a dimethylallyl group onto the adenine at position 37 in tRNAs that read codons beginning with uridine, leading to the formation of N6-(dimethylallyl)adenosine (i(6)A). The chain is tRNA dimethylallyltransferase from Blochmanniella floridana.